Consider the following 87-residue polypeptide: Translation initiation factor IF-1 2 (87 aa).

In terms of domain architecture, S1-like spans 1-72 (MAKEEVIEME…TKGRINFRHK (72 aa)).

The protein belongs to the IF-1 family. As to quaternary structure, component of the 30S ribosomal translation pre-initiation complex which assembles on the 30S ribosome in the order IF-2 and IF-3, IF-1 and N-formylmethionyl-tRNA(fMet); mRNA recruitment can occur at any time during PIC assembly.

Its subcellular location is the cytoplasm. Its function is as follows. One of the essential components for the initiation of protein synthesis. Stabilizes the binding of IF-2 and IF-3 on the 30S subunit to which N-formylmethionyl-tRNA(fMet) subsequently binds. Helps modulate mRNA selection, yielding the 30S pre-initiation complex (PIC). Upon addition of the 50S ribosomal subunit IF-1, IF-2 and IF-3 are released leaving the mature 70S translation initiation complex. In Thiobacillus denitrificans (strain ATCC 25259 / T1), this protein is Translation initiation factor IF-1 2.